We begin with the raw amino-acid sequence, 568 residues long: Cyclin-dependent kinase-like 2 (568 aa).

In terms of domain architecture, Protein kinase spans 4–289; it reads YENLGLVGEG…CADLLRHDFF (286 aa). ATP-binding positions include 10–18 and lysine 33; that span reads VGEGSYGMV. The short motif at 45–51 is the [NKR]KIAxRE element; that stretch reads KKIAMRE. Residue aspartate 126 is the Proton acceptor of the active site. Disordered regions lie at residues 309–333 and 545–568; these read DARNNSLPKKSQNRKKEKDDALGEE and SHQGAGSPLSDDSEADLPRMEHQH. A compositionally biased stretch (basic and acidic residues) spans 322-333; the sequence is RKKEKDDALGEE.

It belongs to the protein kinase superfamily. CMGC Ser/Thr protein kinase family. CDC2/CDKX subfamily. As to expression, expressed in testis, kidney, lung and brain.

It localises to the cytoplasm. The protein localises to the nucleus. It carries out the reaction L-seryl-[protein] + ATP = O-phospho-L-seryl-[protein] + ADP + H(+). The catalysed reaction is L-threonyl-[protein] + ATP = O-phospho-L-threonyl-[protein] + ADP + H(+). In Mus musculus (Mouse), this protein is Cyclin-dependent kinase-like 2.